Here is a 238-residue protein sequence, read N- to C-terminus: Sugar fermentation stimulation protein homolog (238 aa).

Belongs to the SfsA family.

This chain is Sugar fermentation stimulation protein homolog, found in Histophilus somni (strain 2336) (Haemophilus somnus).